The primary structure comprises 385 residues: Multidrug resistance protein MdtE (385 aa).

An N-terminal signal peptide occupies residues 1-20; it reads MNRRRKLLIPLLFCGAMLTA. Cys21 carries N-palmitoyl cysteine lipidation. Cys21 carries the S-diacylglycerol cysteine lipid modification.

This sequence belongs to the membrane fusion protein (MFP) (TC 8.A.1) family. In terms of assembly, homotrimer. Part of the tripartite efflux system MdtEF-TolC, which is composed of an inner membrane transporter, MdtF, a membrane fusion protein, MdtE, and an outer membrane component, TolC. The complex forms a large protein conduit and can translocate molecules across both the inner and outer membranes.

Its subcellular location is the cell inner membrane. In terms of biological role, part of the tripartite efflux system MdtEF-TolC, which confers resistance to various compounds. The chain is Multidrug resistance protein MdtE (mdtE) from Escherichia coli O157:H7.